Here is a 303-residue protein sequence, read N- to C-terminus: UDP-3-O-acyl-N-acetylglucosamine deacetylase (303 aa).

Residues His-78, His-237, and Asp-241 each contribute to the Zn(2+) site. His-264 functions as the Proton donor in the catalytic mechanism.

The protein belongs to the LpxC family. Zn(2+) is required as a cofactor.

The enzyme catalyses a UDP-3-O-[(3R)-3-hydroxyacyl]-N-acetyl-alpha-D-glucosamine + H2O = a UDP-3-O-[(3R)-3-hydroxyacyl]-alpha-D-glucosamine + acetate. It functions in the pathway glycolipid biosynthesis; lipid IV(A) biosynthesis; lipid IV(A) from (3R)-3-hydroxytetradecanoyl-[acyl-carrier-protein] and UDP-N-acetyl-alpha-D-glucosamine: step 2/6. Catalyzes the hydrolysis of UDP-3-O-myristoyl-N-acetylglucosamine to form UDP-3-O-myristoylglucosamine and acetate, the committed step in lipid A biosynthesis. In Xanthomonas euvesicatoria pv. vesicatoria (strain 85-10) (Xanthomonas campestris pv. vesicatoria), this protein is UDP-3-O-acyl-N-acetylglucosamine deacetylase.